The sequence spans 267 residues: Undecaprenyl-diphosphatase (267 aa).

Helical transmembrane passes span 4–24 (ILII…PISS), 41–61 (NIQN…ILLF), 84–104 (ILIL…GFMF), 116–136 (YISY…FISL), 160–180 (CFSL…GLIL), 185–205 (YVLF…VLIL), 216–236 (ENIF…LIFG), and 246–266 (TSLI…LFTC).

Belongs to the UppP family.

Its subcellular location is the cell membrane. The catalysed reaction is di-trans,octa-cis-undecaprenyl diphosphate + H2O = di-trans,octa-cis-undecaprenyl phosphate + phosphate + H(+). Catalyzes the dephosphorylation of undecaprenyl diphosphate (UPP). Confers resistance to bacitracin. In Wigglesworthia glossinidia brevipalpis, this protein is Undecaprenyl-diphosphatase.